Consider the following 864-residue polypeptide: Leucine--tRNA ligase (864 aa).

The short motif at 42 to 52 (PYPSGKLHMGH) is the 'HIGH' region element. Positions 624–628 (KMSKS) match the 'KMSKS' region motif. Residue lysine 627 coordinates ATP.

The protein belongs to the class-I aminoacyl-tRNA synthetase family.

It is found in the cytoplasm. The enzyme catalyses tRNA(Leu) + L-leucine + ATP = L-leucyl-tRNA(Leu) + AMP + diphosphate. The protein is Leucine--tRNA ligase of Burkholderia thailandensis (strain ATCC 700388 / DSM 13276 / CCUG 48851 / CIP 106301 / E264).